The following is a 187-amino-acid chain: Large ribosomal subunit protein eL18x (187 aa).

Positions 150–187 (HFGPAPGVPHSNTKPYVRHKGRKFEKARGKRKSRGFKV) are disordered. The segment covering 165-187 (YVRHKGRKFEKARGKRKSRGFKV) has biased composition (basic residues).

The protein belongs to the eukaryotic ribosomal protein eL18 family.

The sequence is that of Large ribosomal subunit protein eL18x (RPL18C) from Arabidopsis thaliana (Mouse-ear cress).